The chain runs to 712 residues: Polyadenylation factor subunit 2 (712 aa).

The tract at residues 1 to 37 is disordered; the sequence is MTAPTVPADQHGHPLPGPADPAANDTWRPSRYREPLH. WD repeat units follow at residues 131-170, 173-213, 214-253, 256-295, 298-337, 340-380, and 387-426; these read KERS…YESI, VHDD…HGFQ, GHRE…EERS, GHGW…DLST, SSKS…ELEV, GHEK…PSTP, and AHED…GGQE. Disordered regions lie at residues 446-473 and 489-712; these read TKRE…KQQV and KTGP…DGRR. Composition is skewed to gly residues over residues 460 to 469 and 494 to 504; these read AGGGGGGGGD and TTGGGPSGLPG. The segment covering 533-545 has biased composition (low complexity); that stretch reads QGQAQGGQFPRGR. Residues 565–592 are compositionally biased toward basic and acidic residues; the sequence is FADRDRNGGGDRGGMDRDRDSRGGRQDP. Composition is skewed to pro residues over residues 603–612 and 619–671; these read GGPPPGPPPG and PPAP…PQGP. Over residues 678–712 the composition is skewed to gly residues; sequence GGQGNYGASASGGYGQYGGGGGGGGGGGYGRDGRR.

The protein resides in the nucleus. In terms of biological role, required for 3'-end cleavage and polyadenylation of pre-mRNAs. Also involved in chromosome segregation where it has a role in chromosome attachment to the mitotic spindle. In Cryptococcus neoformans var. neoformans serotype D (strain JEC21 / ATCC MYA-565) (Filobasidiella neoformans), this protein is Polyadenylation factor subunit 2 (PFS2).